The chain runs to 299 residues: Glycine--tRNA ligase alpha subunit (299 aa).

Belongs to the class-II aminoacyl-tRNA synthetase family. In terms of assembly, tetramer of two alpha and two beta subunits.

The protein resides in the cytoplasm. The enzyme catalyses tRNA(Gly) + glycine + ATP = glycyl-tRNA(Gly) + AMP + diphosphate. The sequence is that of Glycine--tRNA ligase alpha subunit (glyQ) from Synechocystis sp. (strain ATCC 27184 / PCC 6803 / Kazusa).